The following is an 81-amino-acid chain: Photosystem I iron-sulfur center (81 aa).

4Fe-4S ferredoxin-type domains are found at residues 2 to 31 (SHSVKIYDTCIGCTQCVRACPTDVLEMIPW) and 39 to 68 (IASAPRTEDCVGCKRCESACPTDFLSVRVY). [4Fe-4S] cluster contacts are provided by Cys-11, Cys-14, Cys-17, Cys-21, Cys-48, Cys-51, Cys-54, and Cys-58.

As to quaternary structure, the eukaryotic PSI reaction center is composed of at least 11 subunits. [4Fe-4S] cluster is required as a cofactor.

The protein resides in the plastid. Its subcellular location is the chloroplast thylakoid membrane. It catalyses the reaction reduced [plastocyanin] + hnu + oxidized [2Fe-2S]-[ferredoxin] = oxidized [plastocyanin] + reduced [2Fe-2S]-[ferredoxin]. Functionally, apoprotein for the two 4Fe-4S centers FA and FB of photosystem I (PSI); essential for photochemical activity. FB is the terminal electron acceptor of PSI, donating electrons to ferredoxin. The C-terminus interacts with PsaA/B/D and helps assemble the protein into the PSI complex. Required for binding of PsaD and PsaE to PSI. PSI is a plastocyanin-ferredoxin oxidoreductase, converting photonic excitation into a charge separation, which transfers an electron from the donor P700 chlorophyll pair to the spectroscopically characterized acceptors A0, A1, FX, FA and FB in turn. This chain is Photosystem I iron-sulfur center, found in Sorghum bicolor (Sorghum).